A 160-amino-acid polypeptide reads, in one-letter code: Putative UPF0479 protein YBL113W-A (160 aa).

2 consecutive transmembrane segments (helical) span residues 39-59 and 136-156; these read IVFC…KVLQ and VPMI…ISQH.

It belongs to the UPF0479 family.

It is found in the membrane. The polypeptide is Putative UPF0479 protein YBL113W-A (Saccharomyces cerevisiae (strain ATCC 204508 / S288c) (Baker's yeast)).